The sequence spans 72 residues: Translation initiation factor IF-1 (72 aa).

Positions 1–72 (MARDDVIEVD…DKGRITFRYK (72 aa)) constitute an S1-like domain.

Belongs to the IF-1 family. In terms of assembly, component of the 30S ribosomal translation pre-initiation complex which assembles on the 30S ribosome in the order IF-2 and IF-3, IF-1 and N-formylmethionyl-tRNA(fMet); mRNA recruitment can occur at any time during PIC assembly.

Its subcellular location is the cytoplasm. Functionally, one of the essential components for the initiation of protein synthesis. Stabilizes the binding of IF-2 and IF-3 on the 30S subunit to which N-formylmethionyl-tRNA(fMet) subsequently binds. Helps modulate mRNA selection, yielding the 30S pre-initiation complex (PIC). Upon addition of the 50S ribosomal subunit IF-1, IF-2 and IF-3 are released leaving the mature 70S translation initiation complex. In Helicobacter pylori (strain HPAG1), this protein is Translation initiation factor IF-1.